The following is a 136-amino-acid chain: Large ribosomal subunit protein uL16c (136 aa).

The protein belongs to the universal ribosomal protein uL16 family. In terms of assembly, part of the 50S ribosomal subunit.

Its subcellular location is the plastid. It localises to the chloroplast. The sequence is that of Large ribosomal subunit protein uL16c from Chloranthus spicatus (Chulantree).